The chain runs to 66 residues: Large ribosomal subunit protein uL29 (66 aa).

This sequence belongs to the universal ribosomal protein uL29 family.

The sequence is that of Large ribosomal subunit protein uL29 from Thermosipho melanesiensis (strain DSM 12029 / CIP 104789 / BI429).